We begin with the raw amino-acid sequence, 190 residues long: CASP-like protein 1U3 (190 aa).

The Cytoplasmic segment spans residues 1 to 24; that stretch reads MNGATVQPSYKEAGPVRYHPMHDC. The chain crosses the membrane as a helical span at residues 25–45; sequence LSLILRLLTLGATIAAIVAML. At 46 to 70 the chain is on the extracellular side; it reads KSTQTVPTLLGPHTARWKDFPAFEW. The chain crosses the membrane as a helical span at residues 71 to 91; the sequence is FVIGNSIVLVYAALGTLAACL. At 92-113 the chain is on the cytoplasmic side; sequence SLFTRRGPLSYTKTAWLTFLCD. The chain crosses the membrane as a helical span at residues 114–134; that stretch reads FICSCALISAGSTALGVAWIG. Topologically, residues 135-158 are extracellular; the sequence is KHGQHSAFWNAVCPTVDRFCDYVQ. Residues 159–179 traverse the membrane as a helical segment; it reads GALIATLCGFIFQALSTVIAA. The Cytoplasmic segment spans residues 180 to 190; that stretch reads SALHNLATHRH.

Belongs to the Casparian strip membrane proteins (CASP) family. As to quaternary structure, homodimer and heterodimers.

Its subcellular location is the cell membrane. This is CASP-like protein 1U3 from Physcomitrium patens (Spreading-leaved earth moss).